Consider the following 262-residue polypeptide: 5'-nucleotidase SurE (262 aa).

A divalent metal cation is bound by residues Asp-8, Asp-9, Ser-39, and Asn-91.

This sequence belongs to the SurE nucleotidase family. A divalent metal cation is required as a cofactor.

The protein localises to the cytoplasm. The enzyme catalyses a ribonucleoside 5'-phosphate + H2O = a ribonucleoside + phosphate. Nucleotidase that shows phosphatase activity on nucleoside 5'-monophosphates. The protein is 5'-nucleotidase SurE of Geobacter sulfurreducens (strain ATCC 51573 / DSM 12127 / PCA).